We begin with the raw amino-acid sequence, 285 residues long: Probable endonuclease 4 (285 aa).

Zn(2+)-binding residues include histidine 69, histidine 109, glutamate 145, aspartate 179, histidine 182, histidine 216, aspartate 229, histidine 231, and glutamate 261.

This sequence belongs to the AP endonuclease 2 family. Zn(2+) serves as cofactor.

The catalysed reaction is Endonucleolytic cleavage to 5'-phosphooligonucleotide end-products.. Its function is as follows. Endonuclease IV plays a role in DNA repair. It cleaves phosphodiester bonds at apurinic or apyrimidinic (AP) sites, generating a 3'-hydroxyl group and a 5'-terminal sugar phosphate. The polypeptide is Probable endonuclease 4 (Salmonella heidelberg (strain SL476)).